A 365-amino-acid polypeptide reads, in one-letter code: Solute carrier family 35 member G1 (365 aa).

A disordered region spans residues 1-33; it reads MRPQDSTGVAELQEPGLPLTDDAPPGATEEPAA. Residues 23–33 show a composition bias toward low complexity; that stretch reads APPGATEEPAA. A run of 10 helical transmembrane segments spans residues 69–89, 97–117, 131–151, 156–176, 187–207, 222–242, 252–272, 286–306, 311–333, and 338–357; these read GLGLFYTLLSAFLFSVGSLFV, AVEISAFRCVFQMLVVIPCLI, IFLILRGVLGSTAMMLIYYAY, LADATVITFSSPVFTSIFAWI, ALFTVFTITGVILIVRPPFLF, LKGTFAAIGSAVFAASTLVIL, FLSIWYYVVLGLVESVIILSV, LFLIFIGLFGLGGQIFITKAL, AGPVAIMKTMDVVFAFIFQIIFF, and TWWTVGGALCVVASNVGAAI. 2 consecutive EamA domains span residues 80-202 and 233-357; these read FLFS…LIVR and VFAA…GAAI.

The protein belongs to the TMEM20 family. Interacts with STIM1; stimulated by depletion of intracellular calcium. Interacts with ORAI1. Interacts with the plasma membrane calcium-transporting ATPases ATP2B1 and ATP2B4. Interacts with ATP1A1, ATP2A2, KPNB1 and XPO1. As to expression, ubiquitously expressed.

Its subcellular location is the cell membrane. The protein resides in the endoplasmic reticulum membrane. In terms of biological role, may play a role in intracellular calcium sensing and homeostasis. May act as a negative regulator of plasma membrane calcium-transporting ATPases preventing calcium efflux from the cell. The chain is Solute carrier family 35 member G1 (SLC35G1) from Homo sapiens (Human).